The sequence spans 269 residues: Protein-L-isoaspartate O-methyltransferase (269 aa).

The interval 1–53 is disordered; it reads MSAGQRPAPKFPLRLDQVKPAGRSGAAPLLRPQRPLHQAATERGRGTTPAGLG. Serine 113 is a catalytic residue.

This sequence belongs to the methyltransferase superfamily. L-isoaspartyl/D-aspartyl protein methyltransferase family.

The protein resides in the cytoplasm. The catalysed reaction is [protein]-L-isoaspartate + S-adenosyl-L-methionine = [protein]-L-isoaspartate alpha-methyl ester + S-adenosyl-L-homocysteine. Catalyzes the methyl esterification of L-isoaspartyl residues in peptides and proteins that result from spontaneous decomposition of normal L-aspartyl and L-asparaginyl residues. It plays a role in the repair and/or degradation of damaged proteins. This chain is Protein-L-isoaspartate O-methyltransferase, found in Methylibium petroleiphilum (strain ATCC BAA-1232 / LMG 22953 / PM1).